A 252-amino-acid polypeptide reads, in one-letter code: 3-dehydroquinate dehydratase (252 aa).

3-dehydroquinate-binding positions include Ser-21, 46-48, and Arg-82; that span reads EWR. His-143 serves as the catalytic Proton donor/acceptor. Lys-170 serves as the catalytic Schiff-base intermediate with substrate. 3-dehydroquinate is bound by residues Arg-213, Ser-232, and Gln-236.

The protein belongs to the type-I 3-dehydroquinase family. In terms of assembly, homodimer.

It carries out the reaction 3-dehydroquinate = 3-dehydroshikimate + H2O. It functions in the pathway metabolic intermediate biosynthesis; chorismate biosynthesis; chorismate from D-erythrose 4-phosphate and phosphoenolpyruvate: step 3/7. In terms of biological role, involved in the third step of the chorismate pathway, which leads to the biosynthesis of aromatic amino acids. Catalyzes the cis-dehydration of 3-dehydroquinate (DHQ) and introduces the first double bond of the aromatic ring to yield 3-dehydroshikimate. The chain is 3-dehydroquinate dehydratase from Escherichia coli O6:K15:H31 (strain 536 / UPEC).